We begin with the raw amino-acid sequence, 400 residues long: Proline-rich protein 5 (400 aa).

The interval 301-358 (TDSTSKLSMAGTKPPGEGERPPISNGQFPPLHNLSDSQQGLYNSQRDSPLLPAPSSSP) is disordered. The segment covering 334–347 (LSDSQQGLYNSQRD) has biased composition (polar residues). Positions 348-358 (SPLLPAPSSSP) are enriched in low complexity.

It belongs to the PROTOR family. As to quaternary structure, associated component of the mechanistic target of rapamycin complex 2 (mTORC2).

Its function is as follows. Associated subunit of mTORC2, which regulates cell growth and survival in response to hormonal signals. This chain is Proline-rich protein 5 (prr5), found in Xenopus laevis (African clawed frog).